The primary structure comprises 32 residues: Trypsin inhibitor 2b (32 aa).

Disulfide bonds link C3–C20, C10–C22, and C16–C29.

The protein belongs to the protease inhibitor I7 (squash-type serine protease inhibitor) family.

Its subcellular location is the secreted. In terms of biological role, inhibits trypsin. In Cucumis sativus (Cucumber), this protein is Trypsin inhibitor 2b.